The primary structure comprises 347 residues: MKLHYCLCILLVVTFVPTALVLEDVTPLGTNQSSYNASFLSSFELSAGSYSGDDVIIAKEGTNVSLECLLTVDHYGEVHWYNSKGRQLHSRGGKWLVSDNFLNITSVAFDDRGLYTCIITSPTRASYSVTLRVIFTSGDMSVYYMVVCLIAFTITLILNVTRLCLMSTHLRKTEKAINEFFRTEGAEKLQKAFEIAKRIPIITSAKTLELAKVTQFKTMEFARYIEELARSVPLPPLILNCRAFVEEMFEAVRVDDPDDMGERIKERPALDAQSGIYVINPELGRSNSPGGDSDDGSLSEQGQEIAVQVSVHLQSETKSIGTDSQDSSHFSPPSDPASAEGSTHHRE.

A signal peptide spans 1 to 22 (MKLHYCLCILLVVTFVPTALVL). At 23–139 (EDVTPLGTNQ…TLRVIFTSGD (117 aa)) the chain is on the extracellular side. N-linked (GlcNAc...) asparagine glycosylation is found at Asn31, Asn36, Asn63, and Asn103. Residues 47-130 (AGSYSGDDVI…SPTRASYSVT (84 aa)) enclose the Ig-like C2-type domain. A disulfide bond links Cys68 and Cys117. The helical transmembrane segment at 140–160 (MSVYYMVVCLIAFTITLILNV) threads the bilayer. Over 161 to 347 (TRLCLMSTHL…SAEGSTHHRE (187 aa)) the chain is Cytoplasmic. Positions 280-347 (NPELGRSNSP…SAEGSTHHRE (68 aa)) are disordered. Positions 311–331 (VHLQSETKSIGTDSQDSSHFS) are enriched in polar residues.

In terms of processing, glycosylated.

Its subcellular location is the cell membrane. Its function is as follows. Component of the elastin-associated microfibrils. This chain is Microfibril-associated glycoprotein 3 (Mfap3), found in Rattus norvegicus (Rat).